The following is a 358-amino-acid chain: DnaJ homolog subfamily C member 18 (358 aa).

Residues 82–146 (NYYEILGVSR…DKRLRYDEYG (65 aa)) enclose the J domain. A helical transmembrane segment spans residues 228-248 (AFIQLLPVLVIVIISVITQLL).

Its subcellular location is the endoplasmic reticulum membrane. In terms of biological role, (Microbial infection) In case of infection by polyomavirus, involved in the virus endoplasmic reticulum membrane penetration and infection. Regulates the recruitment of DNAJB12:DNAJB14 into SV40-induced foci and all cooperate to guide SV40 across the endoplasmic reticulum membrane. The foci represent the site from which SV40 penetrates into the cytosol. This Homo sapiens (Human) protein is DnaJ homolog subfamily C member 18.